We begin with the raw amino-acid sequence, 86 residues long: U15-lycotoxin-Ls1a (86 aa).

The signal sequence occupies residues 1–20; it reads MNSKIFAVLFLLAFLSCVLS. Residues 21 to 66 enclose the WAP domain; it reads DQYCPKSSITACKKMNIRNDCCKDDDCTGGSWCCATPCGNFCKYPT. Cystine bridges form between Cys24–Cys54, Cys32–Cys58, Cys41–Cys53, Cys42–Cys80, and Cys47–Cys62.

It belongs to the venom protein 11 family. 01 (wap-1) subfamily. Contains 5 disulfide bonds. As to expression, expressed by the venom gland.

The protein resides in the secreted. Has antibacterial activity. The sequence is that of U15-lycotoxin-Ls1a from Lycosa singoriensis (Wolf spider).